We begin with the raw amino-acid sequence, 521 residues long: U4/U6 small nuclear ribonucleoprotein Prp4 (521 aa).

Lys26 is subject to N6-acetyllysine. WD repeat units lie at residues 228–267 (GDDR…LLHT), 270–317 (GHNT…PVAD), 320–359 (GHTV…EILH), 362–401 (GHSM…CIMF), 404–443 (GHLK…CVYT), 446–486 (AHQN…PLKT), and 489–521 (GHEG…WMAE).

In terms of assembly, component of the precatalytic spliceosome (spliceosome B complex). Component of the U4/U6-U5 tri-snRNP complex, a building block of the precatalytic spliceosome (spliceosome B complex). The U4/U6-U5 tri-snRNP complex is composed of the U4, U6 and U5 snRNAs and at least PRPF3, PRPF4, PRPF6, PRPF8, PRPF31, SNRNP200, TXNL4A, SNRNP40, SNRPB, SNRPD1, SNRPD2, SNRPD3, SNRPE, SNRPF, SNRPG, DDX23, CD2BP2, PPIH, SNU13, EFTUD2, SART1 and USP39, plus LSM2, LSM3, LSM4, LSM5, LSM6, LSM7 and LSM8. Interacts directly with PRPF18, PPIH and PRPF3. Part of a heteromeric complex containing PPIH, PRPF3 and PRPF4 that is stable in the absence of RNA. Interacts with ERCC6.

It localises to the nucleus. The protein localises to the nucleus speckle. Functionally, plays a role in pre-mRNA splicing as component of the U4/U6-U5 tri-snRNP complex that is involved in spliceosome assembly, and as component of the precatalytic spliceosome (spliceosome B complex). This is U4/U6 small nuclear ribonucleoprotein Prp4 (Prpf4) from Mus musculus (Mouse).